Here is a 247-residue protein sequence, read N- to C-terminus: 2,3-bisphosphoglycerate-dependent phosphoglycerate mutase (247 aa).

Residues 8-15 (RHGESTWN), 21-22 (TG), R60, 87-90 (ERHY), K98, 114-115 (RR), and 183-184 (GN) contribute to the substrate site. H9 (tele-phosphohistidine intermediate) is an active-site residue. The active-site Proton donor/acceptor is the E87.

It belongs to the phosphoglycerate mutase family. BPG-dependent PGAM subfamily. As to quaternary structure, homodimer.

It catalyses the reaction (2R)-2-phosphoglycerate = (2R)-3-phosphoglycerate. Its pathway is carbohydrate degradation; glycolysis; pyruvate from D-glyceraldehyde 3-phosphate: step 3/5. In terms of biological role, catalyzes the interconversion of 2-phosphoglycerate and 3-phosphoglycerate. The protein is 2,3-bisphosphoglycerate-dependent phosphoglycerate mutase of Leptothrix cholodnii (strain ATCC 51168 / LMG 8142 / SP-6) (Leptothrix discophora (strain SP-6)).